Reading from the N-terminus, the 490-residue chain is Allantoin permease (490 aa).

Transmembrane regions (helical) follow at residues 36-56, 60-80, 116-136, 151-171, 190-210, 225-245, 265-285, 308-328, 350-370, 373-393, 425-445, and 448-468; these read IWMGCIHNIPTYATVGGLIAI, PWQVLAIIITASLILFGALAL, AIMWLGIQTFAGSTALNILLL, ILGIHLSGLLSFVFFWAIHLL, LVYLVFGGMVWWAVDIAGGLG, TFWPFAAGVTGIIGIWATLIL, FYGLPGTFALFAFASITVTSG, YVIVLSVITLCIATISVNVAA, GSFITALLALFTVPWKLMESA, VYAFLGLIGGMLGPVAGVMMA, AFAATMLGALISLIGMYVPVL, and LYDISWFVGVLISFLFYIVLM.

This sequence belongs to the purine-cytosine permease (2.A.39) family.

It localises to the cell membrane. The enzyme catalyses (S)-allantoin(in) + H(+)(in) = (S)-allantoin(out) + H(+)(out). In terms of biological role, uptake of allantoin into the cell. Allantoin uptake is not dependent on sodium, and PucI is likely to be a proton-coupled symporter. Shows highest recognition for binding of allantoin, good recognition for binding of hydantoin, L-5-benzylhydantoin and 5-hydroxyhydantoin, and to a lesser extent for a range of nucleobases and nucleosides. The sequence is that of Allantoin permease from Bacillus subtilis (strain 168).